The sequence spans 1761 residues: Probable serine/threonine-protein kinase DDB_G0282963 (1761 aa).

12 disordered regions span residues 18–47 (PQQQ…QQQQ), 60–269 (QQQQ…SNKL), 322–458 (SISN…SDFN), 545–717 (QNSS…KSSQ), 749–783 (LKNS…TISQ), 798–830 (AFYN…STSA), 842–956 (TTQI…KSVF), 972–997 (NSHH…EVPT), 1081–1151 (ITSA…CNVN), 1179–1305 (KNNC…PSKQ), 1318–1343 (ALDS…GTPT), and 1355–1459 (QHSR…ECWK). Low complexity-rich tracts occupy residues 19-47 (QQQQ…QQQQ), 60-85 (QQQQ…SNEI), 92-105 (NITN…IISL), and 112-237 (ALNS…NNNN). Residues 238–256 (KQMTPPTFKNNLQVKHQPQ) show a composition bias toward polar residues. 4 stretches are compositionally biased toward low complexity: residues 257-269 (SSSG…SNKL), 322-341 (SISN…TNTT), 348-451 (GSIG…NNGV), and 546-572 (NSSL…NNNI). The segment covering 573–582 (MAGSTSSVIY) has biased composition (polar residues). Residues 591 to 627 (NENNNNNINNDNTVCNINNNNNSNNNKSNNSNNSNNS) are compositionally biased toward low complexity. Positions 633-643 (SSDEEPETDSD) are enriched in acidic residues. Composition is skewed to low complexity over residues 674-697 (NNTN…NNNT), 759-778 (PILS…NNSN), 805-824 (NNNN…NNNN), 847-885 (TSDI…YNNY), 902-956 (TKMS…KSVF), 979-990 (SGNNSSNSNNNN), 1081-1149 (ITSA…CTCN), and 1180-1262 (NNCT…SNNN). Residues 1263 to 1273 (NHHHHHHHHHN) show a composition bias toward basic residues. Composition is skewed to low complexity over residues 1288-1303 (SSSS…SSPS), 1320-1338 (DSTN…TSSN), 1359-1386 (NNSS…NNNN), and 1393-1454 (SNST…MNSN). The Protein kinase domain occupies 1476-1744 (LFLIKKIGAG…AITSLYDDYI (269 aa)). Residues 1482–1490 (IGAGSFSKV) and Lys-1503 each bind ATP. Catalysis depends on Asp-1597, which acts as the Proton acceptor.

It belongs to the protein kinase superfamily. TKL Ser/Thr protein kinase family.

The catalysed reaction is L-seryl-[protein] + ATP = O-phospho-L-seryl-[protein] + ADP + H(+). The enzyme catalyses L-threonyl-[protein] + ATP = O-phospho-L-threonyl-[protein] + ADP + H(+). The protein is Probable serine/threonine-protein kinase DDB_G0282963 of Dictyostelium discoideum (Social amoeba).